The following is a 186-amino-acid chain: Putative manganese efflux pump MntP (186 aa).

Helical transmembrane passes span 1–21 (MSFLTNFLLGLGLSMDAFAVS), 41–61 (VFFGGFQAFMPVLGWLGGSAV), 71–91 (WIAFGLLTFIGGKMIYEALYG), 105–125 (LLMLAIATSIDALAVGISFAF), 130–150 (ILEPVIIIGCVTFVMSFCGAV), and 165–185 (IIGGLILIGIGGKILAEHLLW).

It belongs to the MntP (TC 9.B.29) family.

The protein resides in the cell membrane. Its function is as follows. Probably functions as a manganese efflux pump. This is Putative manganese efflux pump MntP from Methanosarcina barkeri (strain Fusaro / DSM 804).